The chain runs to 102 residues: uncharacterized protein (102 aa).

In terms of domain architecture, HTH cro/C1-type spans 48–102; that stretch reads LNDKRKSLGIELSMLELQTGVSISTLNRLFQDPSQVRFTTVFLVAQTLGVSLCAI. Positions 59-78 form a DNA-binding region, H-T-H motif; sequence LSMLELQTGVSISTLNRLFQ.

This is an uncharacterized protein from Haemophilus influenzae (strain ATCC 51907 / DSM 11121 / KW20 / Rd).